We begin with the raw amino-acid sequence, 417 residues long: MLEQMGKAAKAASWQLAVLTSAQKDSALQVIADSLEANSQSILDANAQDMAEARRNGLVDALLDRLLLNPARLSAIAADVRQVCRLTDPVGQVIDGQRLDSGLSLERRRVPLGVVGVIYEARPNVTVDVAALCLKTGNAVILRGGKETYRTNAATVKVIQQALTDCGLPACAVQAIEDPDRALVNALLRLDRYVDMLIPRGGAGLHKLCREQSTIPVITGGIGVCHIYVDDTIDFEQALPVIENAKIQRPSACNSLETLLVHQAIAERFLPRLSHHMHTLGVTLHADDNARPYLADGPATCVAVTEADYHDEWLSRDLNVKLMDGFEQAVAHIRHYGTQHSDAILTRSIQAADRFVREVDSSVVYVNASTRFTDGGQFGLGAEVAVSTQKLHARGPMGLEALTTYKWIGYGDNLSRP.

It belongs to the gamma-glutamyl phosphate reductase family.

It is found in the cytoplasm. It catalyses the reaction L-glutamate 5-semialdehyde + phosphate + NADP(+) = L-glutamyl 5-phosphate + NADPH + H(+). The protein operates within amino-acid biosynthesis; L-proline biosynthesis; L-glutamate 5-semialdehyde from L-glutamate: step 2/2. Its function is as follows. Catalyzes the NADPH-dependent reduction of L-glutamate 5-phosphate into L-glutamate 5-semialdehyde and phosphate. The product spontaneously undergoes cyclization to form 1-pyrroline-5-carboxylate. This chain is Gamma-glutamyl phosphate reductase, found in Sodalis glossinidius (strain morsitans).